The following is a 326-amino-acid chain: Ribosomal large subunit pseudouridine synthase D (326 aa).

Residue Asp144 is part of the active site.

The protein belongs to the pseudouridine synthase RluA family.

The protein localises to the cytoplasm. The enzyme catalyses uridine(1911/1915/1917) in 23S rRNA = pseudouridine(1911/1915/1917) in 23S rRNA. Functionally, responsible for synthesis of pseudouridine from uracil at positions 1911, 1915 and 1917 in 23S ribosomal RNA. This Borreliella burgdorferi (strain ATCC 35210 / DSM 4680 / CIP 102532 / B31) (Borrelia burgdorferi) protein is Ribosomal large subunit pseudouridine synthase D.